The primary structure comprises 450 residues: L-galactonate dehydratase (450 aa).

The active site involves K221. Mg(2+)-binding residues include D251, E277, and E306. Residue H356 is part of the active site.

Belongs to the mandelate racemase/muconate lactonizing enzyme family. It depends on Mg(2+) as a cofactor.

It carries out the reaction L-galactonate = 2-dehydro-3-deoxy-L-galactonate + H2O. The protein operates within carbohydrate acid metabolism. Its function is as follows. Mediates the conversion of L-galactonate to 2-dehydro-3-deoxy-L-galactonate, the second step in D-galacturonate catabolic process. The polypeptide is L-galactonate dehydratase (lgd1) (Hypocrea jecorina (Trichoderma reesei)).